The sequence spans 899 residues: Proline-rich transmembrane protein 4 (899 aa).

Positions 1-23 (MARHGCLGLGLFCCVLFAATVGP) are cleaved as a signal peptide. Disordered stretches follow at residues 110–152 (LTEW…RRST) and 295–340 (TVPI…PEAP). The next 5 helical transmembrane spans lie at 370-390 (VGAL…LLPW), 392-412 (CPPG…AGTT), 430-450 (ALAW…GLGL), 467-487 (LAAL…GSAA), and 500-520 (GLHA…SCWG). Serine 641 bears the Phosphoserine mark. 2 disordered regions span residues 769–797 (TGGR…AWPA) and 839–869 (PSGS…ASEL). Over residues 840–851 (SGSSPSLPASGS) the composition is skewed to low complexity.

Its subcellular location is the membrane. The sequence is that of Proline-rich transmembrane protein 4 (PRRT4) from Homo sapiens (Human).